The primary structure comprises 240 residues: Urease accessory protein UreF (240 aa).

Belongs to the UreF family. In terms of assembly, ureD, UreF and UreG form a complex that acts as a GTP-hydrolysis-dependent molecular chaperone, activating the urease apoprotein by helping to assemble the nickel containing metallocenter of UreC. The UreE protein probably delivers the nickel.

It localises to the cytoplasm. Required for maturation of urease via the functional incorporation of the urease nickel metallocenter. This chain is Urease accessory protein UreF, found in Bradyrhizobium sp. (strain BTAi1 / ATCC BAA-1182).